The chain runs to 57 residues: Potassium channel toxin alpha-KTx 4.2 (57 aa).

An N-terminal signal peptide occupies residues 1 to 20 (MKVLYGILIIFILCSMFYLS). Residues 21–22 (QE) constitute a propeptide, removed by a carboxypeptidase. Intrachain disulfides connect C29–C50, C35–C55, and C39–C57.

This sequence belongs to the short scorpion toxin superfamily. Potassium channel inhibitor family. Alpha-KTx 04 subfamily. Expressed by the venom gland.

It localises to the secreted. In terms of biological role, blocker for small-conductance calcium-activated potassium channels KCa2.2/KCNN2 (Kd=80 nM) and KCa2.3/KCNN3 (Kd=197 nM) and ERG1/Kv11.1/KCNH2 potassium channels (53% inhibition at 5 uM). Has also been shown to inhibit Kv1.1/KCNA1 and Nav1.7/SCN9A with a moderate potency, as well as Kv11.1/KCNH2/ERG1 and Kv1.2/KCNA2 with a low potency. The protein is Potassium channel toxin alpha-KTx 4.2 of Tityus serrulatus (Brazilian scorpion).